The sequence spans 208 residues: 28 kDa heat- and acid-stable phosphoprotein homolog (208 aa).

Disordered stretches follow at residues 1–133 (MAGG…VTKK) and 145–208 (LSRR…LGLA). A compositionally biased stretch (basic and acidic residues) spans 16–44 (FGRDYERSKGKISRDRVYDEEDIIKRNQE). Low complexity-rich tracts occupy residues 52 to 69 (GSESGSENETKNNNNKSK) and 84 to 100 (RNPNAKKPAAKRPPTTK). Over residues 105–121 (SDSEDDSDKESDSEDEI) the composition is skewed to acidic residues. The stretch at 137–206 (INVNAKVELS…EKMAERRRLG (70 aa)) forms a coiled coil. Composition is skewed to basic and acidic residues over residues 145 to 154 (LSRREKEELA) and 162 to 208 (QNEK…LGLA).

It belongs to the PDAP1 family.

This Dictyostelium discoideum (Social amoeba) protein is 28 kDa heat- and acid-stable phosphoprotein homolog.